We begin with the raw amino-acid sequence, 242 residues long: MSKSRLTVFSFVRRFLLLLMVVLAVFWGGGIALFSVAPVPFSAVMVERQVSAWLHGNFRYVAHSDWVSMDQISPWMGLAVIAAEDQKFSEHWGFDVASIEKALAHNERNENRIRGASTISQQTAKNLFLWDGRSWVRKGLEAGLTLGIETVWSKKRILTVYLNIAEFGDGVFGVEAAAQRYFHKPASKLTRSEAALLAAVLPNPLRFKVSSPSGYVRSRQAWILRQMYQLGGEPFMQQHQLD.

The helical transmembrane segment at 15–35 (FLLLLMVVLAVFWGGGIALFS) threads the bilayer.

Belongs to the glycosyltransferase 51 family.

Its subcellular location is the cell inner membrane. The enzyme catalyses [GlcNAc-(1-&gt;4)-Mur2Ac(oyl-L-Ala-gamma-D-Glu-L-Lys-D-Ala-D-Ala)](n)-di-trans,octa-cis-undecaprenyl diphosphate + beta-D-GlcNAc-(1-&gt;4)-Mur2Ac(oyl-L-Ala-gamma-D-Glu-L-Lys-D-Ala-D-Ala)-di-trans,octa-cis-undecaprenyl diphosphate = [GlcNAc-(1-&gt;4)-Mur2Ac(oyl-L-Ala-gamma-D-Glu-L-Lys-D-Ala-D-Ala)](n+1)-di-trans,octa-cis-undecaprenyl diphosphate + di-trans,octa-cis-undecaprenyl diphosphate + H(+). It functions in the pathway cell wall biogenesis; peptidoglycan biosynthesis. In terms of biological role, peptidoglycan polymerase that catalyzes glycan chain elongation from lipid-linked precursors. The polypeptide is Biosynthetic peptidoglycan transglycosylase (Shigella sonnei (strain Ss046)).